Here is a 712-residue protein sequence, read N- to C-terminus: MTHLSPEAFAIIEGRHADPFRYLGQHNVDGQTIVRAFLPEASRVEVVGEHGEVAPLARIHDAGLFTGTMSSMQRYRLRATFGDSVTDLEDPYRFLPILGDFDLHLLGEGNHERLYDKLGAHPMVIDGVDGVGFVVLAPNARRVSVVGDFNFWNARRHPMRVRGNGYWELFIPRARAGDHYKFDIIGPQGEHLPLKSDPMAFAAEMRPKTASIVVDETRLPRPRPAPHDINKLNKPVSIYEVHLGSWRRKDNNQWLTYRELAEQLPAYARDMGFTHIEFLPINEHPFDGSWGYQPTGLYAPTSRFGSPEDFCALVDACHREGLAVWLDWVPGHFPDDPHGLGHFDGTALYEHANPMQGRHLDWGTLIYNYGRTEVANFLRSNALFWLERYGIDGLRVDAVASMLYLDYSRPSGGWIPNKYGGRENLEAIEFLRRTNIDVFGHFPQATTAAEESTAWPQVSRPVDTGGLGFGYKWNMGWMHDTLRYVSKDPIHRKYHHGEILFGLHYAFSENFILPLSHDEVVHGKRSILGRMPGDDWQRFANLRAYYSFMFGHPGKKLLFMGCELAQEREWNHDTSLDWHLLGDARYAGIQALIRDLNHLYRNQPALHERDCDPEGFEWLITDDADRNVFAWVRKGFDERAHCVVVVNFSPNVYYNYRVRAPLGGTWREVFNSDSSHYGGSNVGNVGQVHASEDQHLNLILPPMAAVFLVPEA.

Catalysis depends on Asp397, which acts as the Nucleophile. The Proton donor role is filled by Glu450.

This sequence belongs to the glycosyl hydrolase 13 family. GlgB subfamily. As to quaternary structure, monomer.

It catalyses the reaction Transfers a segment of a (1-&gt;4)-alpha-D-glucan chain to a primary hydroxy group in a similar glucan chain.. It functions in the pathway glycan biosynthesis; glycogen biosynthesis. Functionally, catalyzes the formation of the alpha-1,6-glucosidic linkages in glycogen by scission of a 1,4-alpha-linked oligosaccharide from growing alpha-1,4-glucan chains and the subsequent attachment of the oligosaccharide to the alpha-1,6 position. The sequence is that of 1,4-alpha-glucan branching enzyme GlgB from Bradyrhizobium sp. (strain ORS 278).